The following is a 2417-amino-acid chain: Protein pad-1 (2417 aa).

4 disordered regions span residues Ser409 to Gly437, Ser449 to Glu475, Thr994 to Thr1029, and Ser1957 to Pro2032. 2 stretches are compositionally biased toward low complexity: residues Thr456–Ser468 and Asp1002–Ala1024. Residues Asp1969 to Leu1982 show a composition bias toward polar residues. Residues Ser2003–Ser2014 are compositionally biased toward basic and acidic residues. Polar residues predominate over residues Ser2015–Thr2025.

It belongs to the DOP1 family.

Its function is as follows. May be involved in protein traffic between late Golgi and early endosomes. Essential for cell patterning during gastrulation. In Caenorhabditis elegans, this protein is Protein pad-1 (pad-1).